The primary structure comprises 312 residues: 2-aminophenol 1,6-dioxygenase subunit beta (312 aa).

Residues histidine 13, histidine 62, and glutamate 251 each contribute to the Fe cation site.

It belongs to the LigB/MhpB extradiol dioxygenase family. The APD complex is a heterotetramer of 2 alpha (CnbCa) and 2 beta (CnbCb) subunits. Fe(2+) is required as a cofactor.

It carries out the reaction 2-aminophenol + O2 = 2-aminomuconate 6-semialdehyde. The catalysed reaction is 2-amino-5-chlorophenol + O2 = 2-amino-5-chloromuconate 6-semialdehyde. Its pathway is xenobiotic degradation; nitrobenzene degradation. The protein operates within xenobiotic degradation; 4-chloronitrobenzene degradation. With respect to regulation, complete loss of activity in the presence of Ni(2+), Co(2+), Cd(2+), Zn(2+) and hydrogen peroxide, however activity with hydrogen peroxide partially restored upon addition of excess ascorbate. Partially inhibited by Fe(2+), Mg(2+), Ca(2+), Mn(2+), Cu(2+) and also by EDTA, at 2 mM concentration. Total activity inhibited in the presence of catechol or 4-nitrocatechol but completely restored after removal of catechol and addition of 2 mM Fe(2+) and 5 mM ascorbate. Functionally, component of the 2-aminophenol 1,6-dioxygenase (APD) complex that catalyzes the ring fission of 2-aminophenol to produce 2-aminomuconic semialdehyde. CnbCb seems to be the catalytic subunit of the complex. Also active on other substrates such as 2-amino-5-chlorophenol (68% activity), protocatechuate (33% activity) and catechol (5% activity). Both 2-aminophenol and 2-amino-5-cholorophenol are likely native substrates for this dioxygenase which is involved in the reductive degradation pathway of both nitrobenzene (NB) and 4-chloronitrobenzene (4-CNB), allowing C.testosteroni strain CNB-1 to grow on these compounds as sole source of carbon, nitrogen, and energy. The protein is 2-aminophenol 1,6-dioxygenase subunit beta of Comamonas testosteroni (Pseudomonas testosteroni).